The sequence spans 125 residues: L-fucose mutarotase (125 aa).

The Proton donor role is filled by His-13.

This sequence belongs to the RbsD / FucU family. FucU mutarotase subfamily.

The catalysed reaction is alpha-L-fucose = beta-L-fucose. Its activity is regulated as follows. Active toward L-galactopyranoside and D-arabinopyranoside but no D-fucopyranoside activity detected. Its function is as follows. Plays a role in the catabolism of L-fucose. Involved in the anomeric conversion of L-fucose. In Xanthomonas campestris pv. campestris (strain ATCC 33913 / DSM 3586 / NCPPB 528 / LMG 568 / P 25), this protein is L-fucose mutarotase.